The chain runs to 367 residues: MSVNRILVINPGSTSTKIGVFDNERPVLEETIRHDEEQIGKYKRIIDQYEFRKETILEVLHSHGINISKLNAVCGRGGLLRPIEGGTYTVNDAMLEDLKNGFSGHHASNLGGILAYEIASGLNIPAFIVDPVVVDEMEPIARISGIAGMERKSIFHALNQKAVARKVAEELNHKYEDLNLLVTHMGGGITVGAHKKGKVIDVNNGLNGEGPFSPERAGTVPVGQLVEMCFSGEYYRDEMIKKLVGQGGLVSLIGTNDAIKVEQMVEKGDPEATLIYKAMAYQVAKEIGGASAVLHGKIDAIVLTGGLAYSKILVDEIKERVDWIADVIVHPGEDELQALAEGALRVLREEEAPKEYIVREKETVARG.

The protein belongs to the acetokinase family.

Its subcellular location is the cytoplasm. The catalysed reaction is butanoate + ATP = butanoyl phosphate + ADP. The polypeptide is Probable butyrate kinase (Bacillus cereus (strain ZK / E33L)).